The chain runs to 186 residues: Ribosome-recycling factor (186 aa).

The protein belongs to the RRF family.

The protein localises to the cytoplasm. Functionally, responsible for the release of ribosomes from messenger RNA at the termination of protein biosynthesis. May increase the efficiency of translation by recycling ribosomes from one round of translation to another. The protein is Ribosome-recycling factor of Chlorobium phaeobacteroides (strain DSM 266 / SMG 266 / 2430).